The sequence spans 688 residues: Potassium-transporting ATPase ATP-binding subunit (688 aa).

The next 4 membrane-spanning stretches (helical) occupy residues 34–54, 62–82, 219–239, and 260–280; these read PVMF…LAIL, ALFT…ANFA, VALT…TATL, and VLVA…LSAI. Aspartate 313 acts as the 4-aspartylphosphate intermediate in catalysis. ATP-binding positions include aspartate 350, glutamate 354, 383 to 390, and lysine 401; that span reads FSAQTRMS. Mg(2+) contacts are provided by aspartate 524 and aspartate 528. Helical transmembrane passes span 594 to 614, 622 to 642, and 667 to 687; these read FAII…LNVM, AILS…PLAL, and GLLV…ALIM.

The protein belongs to the cation transport ATPase (P-type) (TC 3.A.3) family. Type IA subfamily. In terms of assembly, the system is composed of three essential subunits: KdpA, KdpB and KdpC.

It is found in the cell inner membrane. It carries out the reaction K(+)(out) + ATP + H2O = K(+)(in) + ADP + phosphate + H(+). Functionally, part of the high-affinity ATP-driven potassium transport (or Kdp) system, which catalyzes the hydrolysis of ATP coupled with the electrogenic transport of potassium into the cytoplasm. This subunit is responsible for energy coupling to the transport system and for the release of the potassium ions to the cytoplasm. In Yersinia enterocolitica serotype O:8 / biotype 1B (strain NCTC 13174 / 8081), this protein is Potassium-transporting ATPase ATP-binding subunit.